An 854-amino-acid polypeptide reads, in one-letter code: Valine--tRNA ligase (854 aa).

A 'HIGH' region motif is present at residues 46 to 56 (PTVSGDLHIGH). The short motif at 551–555 (KMSKS) is the 'KMSKS' region element. Residue K554 participates in ATP binding.

Belongs to the class-I aminoacyl-tRNA synthetase family. ValS type 2 subfamily. In terms of assembly, monomer.

It is found in the cytoplasm. It carries out the reaction tRNA(Val) + L-valine + ATP = L-valyl-tRNA(Val) + AMP + diphosphate. Catalyzes the attachment of valine to tRNA(Val). As ValRS can inadvertently accommodate and process structurally similar amino acids such as threonine, to avoid such errors, it has a 'posttransfer' editing activity that hydrolyzes mischarged Thr-tRNA(Val) in a tRNA-dependent manner. The polypeptide is Valine--tRNA ligase (Orientia tsutsugamushi (strain Boryong) (Rickettsia tsutsugamushi)).